Reading from the N-terminus, the 1205-residue chain is Nitric oxide synthase 3 (1205 aa).

Positions 1 to 73 are disordered; it reads MGNLKSVGQE…PPDGPKFPRV (73 aa). Glycine 2 is lipidated: N-myristoyl glycine. Residues cysteine 15 and cysteine 26 are each lipidated (S-palmitoyl cysteine). A compositionally biased stretch (gly residues) spans 15–27; sequence CGLGLGLGLGLCG. Residues 44 to 54 are compositionally biased toward pro residues; it reads LAPPPSPPPAP. Residues cysteine 96 and cysteine 101 each contribute to the Zn(2+) site. An interaction with NOSIP region spans residues 100-488; that stretch reads RCLGSLVFPR…TDPWKGSASK (389 aa). Serine 104 is a (6R)-L-erythro-5,6,7,8-tetrahydrobiopterin binding site. Serine 116 is modified (phosphoserine; by CDK5). Cysteine 186 serves as a coordination point for heme b. The L-arginine site is built by glutamine 249, tryptophan 358, tyrosine 359, glutamate 363, and asparagine 368. 3 residues coordinate (6R)-L-erythro-5,6,7,8-tetrahydrobiopterin: alanine 448, tryptophan 449, and phenylalanine 462. A heme b-binding site is contributed by tyrosine 477. Positions 492 to 512 are calmodulin-binding; sequence VTRKKTFKEVANAVKISASLM. Threonine 497 carries the phosphothreonine; by AMPK modification. A Flavodoxin-like domain is found at 522-705; sequence ATILYGSETG…AFGGWAQAAF (184 aa). Residues serine 528, glutamate 529, threonine 530, arginine 532, serine 574, and threonine 575 each contribute to the FMN site. Serine 617, serine 635, and serine 640 each carry phosphoserine. The FMN site is built by serine 656, cysteine 663, glutamate 689, and glutamine 693. In terms of domain architecture, FAD-binding FR-type spans 758–1004; that stretch reads RKMVQATVLA…IRGAPSFRLP (247 aa). Arginine 778 is a binding site for NADP(+). Position 800 (histidine 800) interacts with FAD. Positions 819–850 are disordered; that stretch reads VEDPPPPGEPVAVEQLEKGSPGGPPPSWVRDP. Serine 838 carries the phosphoserine modification. FAD contacts are provided by arginine 940, tyrosine 942, serine 943, threonine 958, alanine 960, tyrosine 964, valine 977, cysteine 978, and serine 979. Positions 1018, 1051, 1080, 1081, 1087, 1089, and 1091 each coordinate NADP(+). At threonine 1177 the chain carries Phosphothreonine. Residue serine 1179 is modified to Phosphoserine; by AMPK. At serine 1181 the chain carries Phosphoserine.

The protein belongs to the NOS family. As to quaternary structure, homodimer. Interacts with NOSIP and NOSTRIN. Interacts with HSP90AB1. Forms a complex with ASL, ASS1 and SLC7A1; the complex regulates cell-autonomous L-arginine synthesis and citrulline recycling while channeling extracellular L-arginine to nitric oxide synthesis pathway. It depends on heme b as a cofactor. Requires FAD as cofactor. The cofactor is FMN. (6R)-L-erythro-5,6,7,8-tetrahydrobiopterin serves as cofactor. In terms of processing, phosphorylation by AMPK at Ser-1179 in the presence of Ca(2+)-calmodulin (CaM) activates activity. In absence of Ca(2+)-calmodulin, AMPK also phosphorylates Thr-497, resulting in inhibition of activity. Phosphorylation of Ser-116 by CDK5 reduces activity.

It localises to the membrane. It is found in the caveola. Its subcellular location is the cytoplasm. The protein resides in the cytoskeleton. The protein localises to the golgi apparatus. It localises to the cell membrane. The catalysed reaction is 2 L-arginine + 3 NADPH + 4 O2 + H(+) = 2 L-citrulline + 2 nitric oxide + 3 NADP(+) + 4 H2O. Stimulated by calcium/calmodulin. Inhibited by NOSIP and NOSTRIN. In terms of biological role, produces nitric oxide (NO) which is implicated in vascular smooth muscle relaxation through a cGMP-mediated signal transduction pathway. NO mediates vascular endothelial growth factor (VEGF)-induced angiogenesis in coronary vessels and promotes blood clotting through the activation of platelets. In Canis lupus familiaris (Dog), this protein is Nitric oxide synthase 3 (NOS3).